Here is a 239-residue protein sequence, read N- to C-terminus: Small ribosomal subunit protein eS1 (239 aa).

The disordered stretch occupies residues 1–24 (MAIQPPGSYPQGNKKGKAKKKSGQ).

Belongs to the eukaryotic ribosomal protein eS1 family. In terms of assembly, component of the small ribosomal subunit. Mature ribosomes consist of a small (40S) and a large (60S) subunit. The 40S subunit contains about 33 different proteins and 1 molecule of RNA (18S). The 60S subunit contains about 49 different proteins and 3 molecules of RNA (25S, 5.8S and 5S).

The protein resides in the cytoplasm. The polypeptide is Small ribosomal subunit protein eS1 (Encephalitozoon cuniculi (strain GB-M1) (Microsporidian parasite)).